Consider the following 340-residue polypeptide: Protein RecA (340 aa).

74–81 lines the ATP pocket; the sequence is GPESSGKT.

This sequence belongs to the RecA family.

It localises to the cytoplasm. Its function is as follows. Can catalyze the hydrolysis of ATP in the presence of single-stranded DNA, the ATP-dependent uptake of single-stranded DNA by duplex DNA, and the ATP-dependent hybridization of homologous single-stranded DNAs. It interacts with LexA causing its activation and leading to its autocatalytic cleavage. The protein is Protein RecA of Porphyromonas gingivalis (strain ATCC 33277 / DSM 20709 / CIP 103683 / JCM 12257 / NCTC 11834 / 2561).